A 303-amino-acid chain; its full sequence is MTLNLDDAKITAEVLTTALPYIQRFVDKLIVVKYGGNAMTDPALESSFARDIVLLKTVGMHPVVVHGGGPQVDNLLKELGRHSDRIDGMRVTDKSTMDIVEMVLGGSVNKSIVSLINKHGGCAIGLTGKDANLILAKKLMMEKIGTDGVAVPVDLGFVGDVVSVNKDVINMLIASDFIPVIAPLGVDEEGNTYNINADLVAGKVAEFLQAEKLMLLTNIKGVLGRDGEVVTGLTPKTVDSLIEDGTISGGMIPKIQCALDAVRSGVKSAVIVDGRVPHATLLEIFTNEGVGTLISRDLDLRSN.

Substrate contacts are provided by residues 68-69 (GG), Arg90, and Asn194.

This sequence belongs to the acetylglutamate kinase family. ArgB subfamily.

It localises to the cytoplasm. The catalysed reaction is N-acetyl-L-glutamate + ATP = N-acetyl-L-glutamyl 5-phosphate + ADP. It participates in amino-acid biosynthesis; L-arginine biosynthesis; N(2)-acetyl-L-ornithine from L-glutamate: step 2/4. Its function is as follows. Catalyzes the ATP-dependent phosphorylation of N-acetyl-L-glutamate. The protein is Acetylglutamate kinase of Psychrobacter arcticus (strain DSM 17307 / VKM B-2377 / 273-4).